The chain runs to 555 residues: Energy-dependent translational throttle protein EttA (555 aa).

2 ABC transporter domains span residues 6 to 259 (YTMH…AQEA) and 324 to 550 (LEVS…RIKY). An ATP-binding site is contributed by 39–46 (GLNGAGKS). Residues 95–139 (SEVVNALKRLDEVYALYADPDADFDKLAAEQGRLEEIIQAHDGHN) form an arm region. The tract at residues 242–322 (GNYSSWLEQK…IPPGPRLGDK (81 aa)) is ptIM. ATP is bound at residue 356 to 363 (GPNGAGKS).

Belongs to the ABC transporter superfamily. ABCF family. Translational throttle EttA subfamily. As to quaternary structure, monomer. Probably contacts ribosomal proteins L1, L5, L33 and S7, the 16S and 23S rRNA and the P-site containing tRNA(fMet).

The protein localises to the cytoplasm. The catalysed reaction is ATP + H2O = ADP + phosphate + H(+). A translation factor that gates the progression of the 70S ribosomal initiation complex (IC, containing tRNA(fMet) in the P-site) into the translation elongation cycle by using a mechanism sensitive to the ATP/ADP ratio. Binds to the 70S ribosome E-site where it modulates the state of the translating ribosome during subunit translocation. ATP hydrolysis probably frees it from the ribosome, which can enter the elongation phase. The sequence is that of Energy-dependent translational throttle protein EttA from Escherichia coli O6:H1 (strain CFT073 / ATCC 700928 / UPEC).